An 80-amino-acid chain; its full sequence is DinI-like protein Z2083/ECs2153 (80 aa).

The sequence is that of DinI-like protein Z2083/ECs2153 from Escherichia coli O157:H7.